We begin with the raw amino-acid sequence, 429 residues long: Histidine--tRNA ligase (429 aa).

Belongs to the class-II aminoacyl-tRNA synthetase family. Homodimer.

The protein localises to the cytoplasm. It catalyses the reaction tRNA(His) + L-histidine + ATP = L-histidyl-tRNA(His) + AMP + diphosphate + H(+). This Pseudomonas aeruginosa (strain LESB58) protein is Histidine--tRNA ligase.